We begin with the raw amino-acid sequence, 242 residues long: MAPK-interacting and spindle-stabilizing protein-like (242 aa).

Disordered stretches follow at residues 1 to 145 (MSDE…SLGP) and 192 to 242 (PPGA…HSYH). The residue at position 2 (serine 2) is an N-acetylserine. Residues serine 2, serine 6, and serine 15 each carry the phosphoserine modification. Over residues 13–29 (EQSSAKPPAVTNTKAGH) the composition is skewed to polar residues. A compositionally biased stretch (low complexity) spans 30–43 (SSQGWPGSSPWSNP). Composition is skewed to pro residues over residues 44–53 (SAPPAMPSGL) and 75–114 (SMPPTGPPPGPPGPFPPPGPSCPPPGVPYPAPAVPGPGPT). Positions 192–210 (PPGAWGPAAPYPGPAGSYP) are enriched in low complexity.

Belongs to the MISS family.

This Mus musculus (Mouse) protein is MAPK-interacting and spindle-stabilizing protein-like (Mapk1ip1l).